Consider the following 220-residue polypeptide: Artemin (220 aa).

The signal sequence occupies residues 1–39; it reads MELGLGGLSTLSHCPWPRQQPALWPTLAALALLSSVAEA. Residues 40–107 constitute a propeptide that is removed on maturation; sequence SLGSAPRSPA…ALPRGGRAAR (68 aa). Residues 41–121 form a disordered region; that stretch reads LGSAPRSPAP…GSRARAAGAR (81 aa). Composition is skewed to pro residues over residues 47-58 and 81-98; these read SPAPREGPPPVL and PPPQ…PPSA. A compositionally biased stretch (low complexity) spans 99–121; the sequence is LPRGGRAARAGGPGSRARAAGAR. 3 disulfide bridges follow: cysteine 123/cysteine 188, cysteine 150/cysteine 216, and cysteine 154/cysteine 218. A glycan (N-linked (GlcNAc...) asparagine) is linked at asparagine 202.

The protein belongs to the TGF-beta family. GDNF subfamily. Homodimer; disulfide-linked. Interacts with GFRA3 coreceptor and RET: forms a 2:2:2 ternary complex composed of ARTN ligand, GFRA3 and RET receptor. Ubiquitous. Expressed at high levels in peripheral tissues including prostate, placenta, pancreas, heart, kidney, pituitary gland, lung and testis. Expressed at low levels in the brain.

Its subcellular location is the secreted. Its function is as follows. Growth factor that supports the survival of sensory and sympathetic peripheral neurons in culture and also supports the survival of dopaminergic neurons of the ventral mid-brain. Acts by binding to its coreceptor, GFRA3, leading to autophosphorylation and activation of the RET receptor. Strong attractant of gut hematopoietic cells thus promoting the formation Peyer's patch-like structures, a major component of the gut-associated lymphoid tissue. The polypeptide is Artemin (Homo sapiens (Human)).